Reading from the N-terminus, the 497-residue chain is Probable cytosol aminopeptidase (497 aa).

Positions 267 and 272 each coordinate Mn(2+). K279 is a catalytic residue. The Mn(2+) site is built by D290, D349, and E351. R353 is a catalytic residue.

Belongs to the peptidase M17 family. Mn(2+) is required as a cofactor.

It localises to the cytoplasm. It catalyses the reaction Release of an N-terminal amino acid, Xaa-|-Yaa-, in which Xaa is preferably Leu, but may be other amino acids including Pro although not Arg or Lys, and Yaa may be Pro. Amino acid amides and methyl esters are also readily hydrolyzed, but rates on arylamides are exceedingly low.. The catalysed reaction is Release of an N-terminal amino acid, preferentially leucine, but not glutamic or aspartic acids.. Its function is as follows. Presumably involved in the processing and regular turnover of intracellular proteins. Catalyzes the removal of unsubstituted N-terminal amino acids from various peptides. In Syntrophotalea carbinolica (strain DSM 2380 / NBRC 103641 / GraBd1) (Pelobacter carbinolicus), this protein is Probable cytosol aminopeptidase.